A 102-amino-acid chain; its full sequence is MYAIIKNGGKQYKVQEGDILLFDRMTLEPKATFEIKEVLAVNAGELKMGAPFLEGAVVTAEVINEGRDKKVITFKKRRRKDSKVKRGFRRDYTRVRITKIAA.

It belongs to the bacterial ribosomal protein bL21 family. In terms of assembly, part of the 50S ribosomal subunit. Contacts protein L20.

Functionally, this protein binds to 23S rRNA in the presence of protein L20. The chain is Large ribosomal subunit protein bL21 from Sulfurimonas denitrificans (strain ATCC 33889 / DSM 1251) (Thiomicrospira denitrificans (strain ATCC 33889 / DSM 1251)).